Consider the following 511-residue polypeptide: 2,3-bisphosphoglycerate-independent phosphoglycerate mutase (511 aa).

Asp-12 lines the Mn(2+) pocket. Phosphotyrosine is present on Tyr-36. Mn(2+) is bound at residue Ser-62. Ser-62 (phosphoserine intermediate) is an active-site residue. Substrate-binding positions include His-123, 153 to 154 (RD), Arg-185, Arg-191, 261 to 264 (RPDR), and Lys-336. Residues Asp-403, His-407, Asp-444, His-445, and His-462 each contribute to the Mn(2+) site.

The protein belongs to the BPG-independent phosphoglycerate mutase family. Monomer. It depends on Mn(2+) as a cofactor.

The catalysed reaction is (2R)-2-phosphoglycerate = (2R)-3-phosphoglycerate. It functions in the pathway carbohydrate degradation; glycolysis; pyruvate from D-glyceraldehyde 3-phosphate: step 3/5. Functionally, essential for rapid growth and for sporulation. Catalyzes the interconversion of 2-phosphoglycerate and 3-phosphoglycerate. This is 2,3-bisphosphoglycerate-independent phosphoglycerate mutase from Bacillus pumilus (strain SAFR-032).